The primary structure comprises 270 residues: tRNA pseudouridine synthase A (270 aa).

The active-site Nucleophile is the aspartate 60. Residues 107–111 (FHARF) form an RNA binding region. Tyrosine 118 provides a ligand contact to substrate. An interaction with tRNA region spans residues 168–172 (QCQSR).

The protein belongs to the tRNA pseudouridine synthase TruA family. In terms of assembly, homodimer.

It catalyses the reaction uridine(38/39/40) in tRNA = pseudouridine(38/39/40) in tRNA. In terms of biological role, formation of pseudouridine at positions 38, 39 and 40 in the anticodon stem and loop of transfer RNAs. This Escherichia coli O9:H4 (strain HS) protein is tRNA pseudouridine synthase A.